The sequence spans 344 residues: Arginase 2, chloroplastic/mitochondrial (344 aa).

A chloroplast and mitochondrion-targeting transit peptide spans 1 to 26; that stretch reads MWKIGQRGVPYFQRLIAAPFTTLRSL. H163, D187, H189, and D191 together coordinate Mn(2+). Substrate-binding positions include 189–193, 197–199, and N228; these read HPDIY and EGN. Residues D272 and D274 each contribute to the Mn(2+) site. E315 is a substrate binding site.

Belongs to the arginase family. It depends on Mn(2+) as a cofactor. As to expression, expressed in vasculature of roots, root tips, leaves and cotyledons.

The protein localises to the mitochondrion. Its subcellular location is the plastid. It is found in the chloroplast. The enzyme catalyses L-arginine + H2O = urea + L-ornithine. The catalysed reaction is agmatine + H2O = urea + putrescine. The protein operates within nitrogen metabolism; urea cycle; L-ornithine and urea from L-arginine: step 1/1. It participates in amine and polyamine biosynthesis; putrescine biosynthesis via agmatine pathway; putrescine from agmatine: step 1/1. Functionally, catalyzes the hydrolysis of L-arginine to urea and L-ornithine. The latter can be utilized in the urea cycle or as a precursor for the synthesis of both polyamines and proline. Possesses agmatinase activity. Catalyzes the formation of putrescine from agmatine. The polypeptide is Arginase 2, chloroplastic/mitochondrial (ARGAH2) (Arabidopsis thaliana (Mouse-ear cress)).